A 685-amino-acid chain; its full sequence is Multicopper oxidase VdtB (685 aa).

The first 17 residues, 1-17, serve as a signal peptide directing secretion; it reads MPAYLLLLACNVLLVLG. Plastocyanin-like domains are found at residues 26-139 and 168-368; these read LTWE…IRRK and IMML…RYKN. N-linked (GlcNAc...) asparagine glycosylation occurs at Asn71. 4 residues coordinate Cu cation: His75, His77, His119, and His121. 5 N-linked (GlcNAc...) asparagine glycosylation sites follow: Asn178, Asn229, Asn253, Asn432, and Asn475. One can recognise a Plastocyanin-like 3 domain in the interval 466–585; that stretch reads DDDLIIRTQN…DNGMAMAILD (120 aa). His500 provides a ligand contact to Cu cation. Asn517 carries an N-linked (GlcNAc...) asparagine glycan. The helical transmembrane segment at 627–647 threads the bilayer; that stretch reads SLVWAGGAAVVLLSLFIGGLW.

This sequence belongs to the multicopper oxidase family.

It localises to the membrane. It catalyses the reaction 4 semiviriditoxin + O2 = 2 (M)-viriditoxin + 2 H2O. It participates in secondary metabolite biosynthesis. Functionally, multicopper oxidase; part of the gene cluster that mediates the biosynthesis of viriditoxin, one of the 'classical' secondary metabolites produced by fungi and that has antibacterial activity. The first step is performed by the polyketide synthase VdtA which condenses one acetyl-CoA and 6 malonyl-CoA units to form the heptaketide monomer backbone of viriditoxin. The product of VdtA is then O-methylated on C7 by the O-methyltransferase VdtC. The O-methyl group is important for the stereoselective coupling of the monomers at the final step of viriditoxin biosynthesis. The short-chain dehydrogenase/reductase VdtF then acts as a stereospecific reductase converting the pyrone to dihydropyrone via the reduction of the C3-C4 double bond. The FAD-binding monooxygenase VdtE then converts the ketone group into a methyl-ester group to yield semi-viriditoxin. Finally, the laccase VdtB is involved in dimerization of 2 semi-viriditoxin molecules to yield the final viriditoxin. VdtB is responsible for the regioselective 6,6'-coupling of semi-viriditoxin, which yields (M)-viriditoxin and (P)-viriditoxin at a ratio of 1:2. The non-catalytic carboxylesterase-like protein VdtD affects the stereochemistical outcome of the coupling. The highly reducing polyketide synthase VdtX is not involved in viriditoxin synthesis, but might possibly play a role in the production of additional metabolites not identified yet. The protein is Multicopper oxidase VdtB of Byssochlamys spectabilis (Paecilomyces variotii).